The primary structure comprises 449 residues: Gamma conglutin 1 (449 aa).

Positions 1 to 33 (MARNMAHILHILVISLSYSFLFVSSSSQDSQSL) are cleaved as a signal peptide. The region spanning 60 to 429 (HWANIHKRTP…DLERSRVGFN (370 aa)) is the Peptidase A1 domain. 5 cysteine pairs are disulfide-bonded: Cys-88/Cys-178, Cys-102/Cys-115, Cys-107/Cys-133, Cys-118/Cys-128, and Cys-350/Cys-391. An N-linked (GlcNAc...) asparagine glycan is attached at Asn-130.

Belongs to the peptidase A1 family. As to quaternary structure, two-subunit monomeric unit made of alpha and beta subunits coupled by disulfide bonds (at pH 4.5 and under non-reducing conditions). Can also form oligomers including dimer, tetramer and cyclic hexamer (trimer of dimers) (at pH &gt; 5.5). Component of globulins complexes which accumulate in seeds. Interacts with flavonoids (e.g. apigenin glucosides) present in globulins complexes. Forms a static complex with vitexin. Post-translationally, undergoes very complex post-translational maturation; the proteolytic processing leading to the formation of two alpha and beta subunits is incomplete, leaving a certain amount of the protein in an uncut form. Glycosylated on alpha chain. As to expression, expressed in developing cotyledons and in the embryonic axis of germinating seeds. Accumulates in seeds, especially in the protein bodies of developing cotyledonary cells (at protein level). Also detected, at low levels, in plumules and radicles.

It localises to the secreted. It is found in the extracellular space. Functionally, sulfur-rich seed storage protein that remains undegraded at germination. The sequence is that of Gamma conglutin 1 from Lupinus angustifolius (Narrow-leaved blue lupine).